The following is a 178-amino-acid chain: Interleukin-10 (178 aa).

The N-terminal stretch at 1–18 is a signal peptide; the sequence is MHSSALLCCLVLLTGVRA. 2 disulfides stabilise this stretch: Cys-30/Cys-126 and Cys-80/Cys-132. A glycan (N-linked (GlcNAc...) asparagine) is linked at Asn-134.

The protein belongs to the IL-10 family. In terms of assembly, homodimer. Interacts with IL10RA and IL10RB.

The protein localises to the secreted. Major immune regulatory cytokine that acts on many cells of the immune system where it has profound anti-inflammatory functions, limiting excessive tissue disruption caused by inflammation. Mechanistically, IL10 binds to its heterotetrameric receptor comprising IL10RA and IL10RB leading to JAK1 and STAT2-mediated phosphorylation of STAT3. In turn, STAT3 translocates to the nucleus where it drives expression of anti-inflammatory mediators. Targets antigen-presenting cells (APCs) such as macrophages and monocytes and inhibits their release of pro-inflammatory cytokines including granulocyte-macrophage colony-stimulating factor /GM-CSF, granulocyte colony-stimulating factor/G-CSF, IL-1 alpha, IL-1 beta, IL-6, IL-8 and TNF-alpha. Also interferes with antigen presentation by reducing the expression of MHC-class II and co-stimulatory molecules, thereby inhibiting their ability to induce T cell activation. In addition, controls the inflammatory response of macrophages by reprogramming essential metabolic pathways including mTOR signaling. This chain is Interleukin-10 (IL10), found in Pan troglodytes (Chimpanzee).